The sequence spans 267 residues: Cilia- and flagella-associated protein 300 (267 aa).

It belongs to the CFAP300 family. Interacts with DNAAF2. In terms of tissue distribution, expressed in nasal epithelial cells.

The protein localises to the cytoplasm. It localises to the cytoskeleton. The protein resides in the cilium axoneme. Its function is as follows. Cilium- and flagellum-specific protein that plays a role in axonemal structure organization and motility. May play a role in outer and inner dynein arm assembly. This is Cilia- and flagella-associated protein 300 from Homo sapiens (Human).